We begin with the raw amino-acid sequence, 529 residues long: Cytochrome P450 monooxygenase ausG (529 aa).

Residues Phe31–Phe51 traverse the membrane as a helical segment. Cys470 provides a ligand contact to heme.

This sequence belongs to the cytochrome P450 family. It depends on heme as a cofactor.

The protein localises to the membrane. It participates in secondary metabolite biosynthesis; terpenoid biosynthesis. Cytochrome P450 monooxygenase; part of the gene cluster B that mediates the biosynthesis of austinol and dehydroaustinol, two fungal meroterpenoids. The first step of the pathway is the synthesis of 3,5-dimethylorsellinic acid by the polyketide synthase ausA. 3,5-dimethylorsellinic acid is then prenylated by the polyprenyl transferase ausN. Further epoxidation by the FAD-dependent monooxygenase ausM and cyclization by the probable terpene cyclase ausL lead to the formation of protoaustinoid A. Protoaustinoid A is then oxidized to spiro-lactone preaustinoid A3 by the combined action of the FAD-binding monooxygenases ausB and ausC, and the dioxygenase ausE. Acid-catalyzed keto-rearrangement and ring contraction of the tetraketide portion of preaustinoid A3 by ausJ lead to the formation of preaustinoid A4. The aldo-keto reductase ausK, with the help of ausH, is involved in the next step by transforming preaustinoid A4 into isoaustinone which is in turn hydroxylated by the P450 monooxygenase ausI to form austinolide. Finally, the cytochrome P450 monooxygenase ausG modifies austinolide to austinol. Austinol can be further modified to dehydroaustinol which forms a diffusible complex with diorcinol that initiates conidiation. Due to genetic rearrangements of the clusters and the subsequent loss of some enzymes, the end products of the Emericella nidulans austinoid biosynthesis clusters are austinol and dehydroaustinol, even if additional enzymes, such as the O-acetyltransferase ausQ and the cytochrome P450 monooxygenase ausR are still functional. In Emericella nidulans (strain FGSC A4 / ATCC 38163 / CBS 112.46 / NRRL 194 / M139) (Aspergillus nidulans), this protein is Cytochrome P450 monooxygenase ausG.